We begin with the raw amino-acid sequence, 449 residues long: Bifunctional protein GlmU (449 aa).

The pyrophosphorylase stretch occupies residues 1 to 231 (MVRNCLSIVL…FDNVIGINNC (231 aa)). Residues 10–13 (LAAG), K24, Q77, and 82–83 (GT) contribute to the UDP-N-acetyl-alpha-D-glucosamine site. A Mg(2+)-binding site is contributed by D107. The UDP-N-acetyl-alpha-D-glucosamine site is built by G143, E157, N172, and N229. Residue N229 coordinates Mg(2+). A linker region spans residues 232–252 (FELFEADALWQKRKARDLMLS). An N-acetyltransferase region spans residues 253–449 (GVTILKPESV…AHLSKNKRNK (197 aa)). UDP-N-acetyl-alpha-D-glucosamine-binding residues include R318 and K336. H348 functions as the Proton acceptor in the catalytic mechanism. The UDP-N-acetyl-alpha-D-glucosamine site is built by Y351 and N362. Acetyl-CoA contacts are provided by residues A365, 371 to 372 (NY), S390, S408, and R425.

In the N-terminal section; belongs to the N-acetylglucosamine-1-phosphate uridyltransferase family. It in the C-terminal section; belongs to the transferase hexapeptide repeat family. Homotrimer. Mg(2+) is required as a cofactor.

It is found in the cytoplasm. The catalysed reaction is alpha-D-glucosamine 1-phosphate + acetyl-CoA = N-acetyl-alpha-D-glucosamine 1-phosphate + CoA + H(+). It catalyses the reaction N-acetyl-alpha-D-glucosamine 1-phosphate + UTP + H(+) = UDP-N-acetyl-alpha-D-glucosamine + diphosphate. Its pathway is nucleotide-sugar biosynthesis; UDP-N-acetyl-alpha-D-glucosamine biosynthesis; N-acetyl-alpha-D-glucosamine 1-phosphate from alpha-D-glucosamine 6-phosphate (route II): step 2/2. It functions in the pathway nucleotide-sugar biosynthesis; UDP-N-acetyl-alpha-D-glucosamine biosynthesis; UDP-N-acetyl-alpha-D-glucosamine from N-acetyl-alpha-D-glucosamine 1-phosphate: step 1/1. The protein operates within bacterial outer membrane biogenesis; LPS lipid A biosynthesis. In terms of biological role, catalyzes the last two sequential reactions in the de novo biosynthetic pathway for UDP-N-acetylglucosamine (UDP-GlcNAc). The C-terminal domain catalyzes the transfer of acetyl group from acetyl coenzyme A to glucosamine-1-phosphate (GlcN-1-P) to produce N-acetylglucosamine-1-phosphate (GlcNAc-1-P), which is converted into UDP-GlcNAc by the transfer of uridine 5-monophosphate (from uridine 5-triphosphate), a reaction catalyzed by the N-terminal domain. The sequence is that of Bifunctional protein GlmU from Bartonella bacilliformis (strain ATCC 35685 / KC583 / Herrer 020/F12,63).